The following is a 1255-amino-acid chain: Structural polyprotein (1255 aa).

Residues 1–33 form a necessary for nucleocapsid assembly and virus assembly region; sequence MFPFQPMYPMQPMPYRNPFAAPRRPWFPRTDPF. Positions 33–68 are host transcription inhibition; the sequence is FLAMQVQELTRSMANLTFKQRRDAPPEGPPAKKPKR. Positions 41 to 48 match the Supraphysiological nuclear export signal motif; that stretch reads LTRSMANL. The disordered stretch occupies residues 44 to 119; it reads SMANLTFKQR…KKPGKRQRMV (76 aa). The Nuclear localization signal motif lies at 64–68; sequence KKPKR. Basic residues predominate over residues 80-92; sequence GKKKKNQGKKKAK. The interval 91–127 is binding to the viral RNA; that stretch reads AKTGPPNPKAQSGNKKKPNKKPGKRQRMVMKLESDKT. The residue at position 93 (threonine 93) is a Phosphothreonine. Residues 104–118 show a composition bias toward basic residues; sequence NKKKPNKKPGKRQRM. The ribosome-binding stretch occupies residues 112–126; the sequence is PGKRQRMVMKLESDK. Phosphoserine is present on serine 124. Residues 126–275 form the Peptidase S3 domain; that stretch reads KTFPIMLEGK…KYTPENCEQW (150 aa). Residue threonine 127 is modified to Phosphothreonine. The Charge relay system role is filled by histidine 152. Residues 168–173 are interaction with spike glycoprotein E2; it reads KKASKY. Catalysis depends on charge relay system residues aspartate 174 and serine 226. Residues 260-264 form an interaction with spike glycoprotein E2 region; that stretch reads EKGVT. The functions as an uncleaved signal peptide for the precursor of protein E3/E2 stretch occupies residues 276 to 287; the sequence is SLVTTMCLLANV. Residues 276-701 lie on the Extracellular side of the membrane; sequence SLVTTMCLLA…HYYHRYPMST (426 aa). 7 disulfide bridges follow: cysteine 282–cysteine 291, cysteine 353–cysteine 457, cysteine 356–cysteine 361, cysteine 424–cysteine 438, cysteine 485–cysteine 600, cysteine 534–cysteine 560, and cysteine 536–cysteine 554. A glycan (N-linked (GlcNAc...) asparagine; by host) is linked at asparagine 286. Asparagine 652 carries an N-linked (GlcNAc...) asparagine; by host glycan. Residues 702-722 form a helical membrane-spanning segment; the sequence is ILGLSICAAIVTVSVAASTWL. Over 723–757 the chain is Cytoplasmic; sequence FCKSRVSCLTPYRLTPNARMPLCLAVLCCARTARA. The interaction with the capsid protein stretch occupies residues 725–729; sequence KSRVS. S-palmitoyl cysteine; by host attachment occurs at residues cysteine 730, cysteine 750, and cysteine 751. Residues 730-750 are transient transmembrane before p62-6K protein processing; sequence CLTPYRLTPNARMPLCLAVLC. A disulfide bridge links cysteine 730 with cysteine 751. Topologically, residues 758 to 769 are extracellular; the sequence is ETTWESLDHLWN. The helical transmembrane segment at 770-790 threads the bilayer; it reads NNQQMFWIQLLIPLAALIVVT. Position 791 (arginine 791) is a topological domain, cytoplasmic. A helical membrane pass occupies residues 792 to 812; the sequence is LLKCVCCVVPFLVVAGAAGAG. Residues 813–1225 are Extracellular-facing; sequence AYEHATTMPS…SKTAWTWLTS (413 aa). Cystine bridges form between cysteine 862–cysteine 927, cysteine 875–cysteine 907, cysteine 876–cysteine 909, and cysteine 881–cysteine 891. The tract at residues 897–914 is E1 fusion peptide loop; sequence VYPFMWGGAYCFCDTENT. N-linked (GlcNAc...) asparagine; by host glycans are attached at residues asparagine 947 and asparagine 1083. 4 disulfide bridges follow: cysteine 1072-cysteine 1084, cysteine 1114-cysteine 1189, cysteine 1119-cysteine 1193, and cysteine 1141-cysteine 1183. A helical transmembrane segment spans residues 1226–1246; sequence LLGGSAVIIIIGLVLATIVAM. The Cytoplasmic portion of the chain corresponds to 1247–1255; that stretch reads YVLTNQKHN.

In terms of assembly, homodimer. Homomultimer. Interacts with host karyopherin KPNA4; this interaction allows the nuclear import of the viral capsid protein. Interacts with spike glycoprotein E2. Interacts with host IRAK1; the interaction leads to inhibition of IRAK1-dependent signaling. Part of a tetrameric complex composed of host CRM1, host importin alpha/beta dimer and the viral capsid; this complex blocks the receptor-mediated transport through the nuclear pore. Interacts with host phosphatase PPP1CA; this interaction dephosphorylates the capsid protein, which increases its ability to bind to the viral genome. As to quaternary structure, the precursor of protein E3/E2 and E1 form a heterodimer shortly after synthesis. Interacts with spike glycoprotein E2. The precursor of protein E3/E2 and E1 form a heterodimer shortly after synthesis. Processing of the precursor of protein E3/E2 into E2 and E3 results in a heterodimer of the spike glycoproteins E2 and E1. Spike at virion surface are constituted of three E2-E1 heterodimers. After target cell attachment and endocytosis, E1 change conformation to form homotrimers. Interacts with 6K protein. Interacts with host LDLRAD3; this interaction mediates viral entry to the host cell. In terms of assembly, interacts with spike glycoprotein E1. Processing of the precursor of protein E3/E2 into E2 and E3 results in a heterodimer of the spike glycoproteins E2 and E1. Spike at virion surface are constituted of a trimer of E2-E1 heterodimers. Interacts with 6K protein. Interacts with host LDLRAD3; this interaction mediates viral entry to the host cell. As to quaternary structure, oligomer. Interacts with spike glycoprotein E1. Interacts with spike glycoprotein E2. Structural polyprotein: Specific enzymatic cleavages in vivo yield mature proteins. Capsid protein is auto-cleaved during polyprotein translation, unmasking a signal peptide at the N-terminus of the precursor of E3/E2. The remaining polyprotein is then targeted to the host endoplasmic reticulum, where host signal peptidase cleaves it into pE2, 6K and E1 proteins. pE2 is further processed to mature E3 and E2 by host furin in trans-Golgi vesicle. Post-translationally, phosphorylated on serine and threonine residues. In terms of processing, palmitoylated via thioester bonds. These palmitoylations may induce disruption of the C-terminus transmembrane. This would result in the reorientation of E2 C-terminus from lumenal to cytoplasmic side. N-glycosylated. Post-translationally, palmitoylated via thioester bonds.

It is found in the virion. The protein localises to the host cytoplasm. The protein resides in the host cell membrane. Its subcellular location is the host nucleus. It localises to the virion membrane. It is found in the host Golgi apparatus. The protein localises to the host trans-Golgi network. The protein resides in the host endoplasmic reticulum. It catalyses the reaction Autocatalytic release of the core protein from the N-terminus of the togavirus structural polyprotein by hydrolysis of a -Trp-|-Ser- bond.. Forms an icosahedral capsid with a T=4 symmetry composed of 240 copies of the capsid protein surrounded by a lipid membrane through which penetrate 80 spikes composed of trimers of E1-E2 heterodimers. The capsid protein binds to the viral RNA genome at a site adjacent to a ribosome binding site for viral genome translation following genome release. Possesses a protease activity that results in its autocatalytic cleavage from the nascent structural protein. Following its self-cleavage, the capsid protein transiently associates with ribosomes, and within several minutes the protein binds to viral RNA and rapidly assembles into icosahedric core particles. The resulting nucleocapsid eventually associates with the cytoplasmic domain of the spike glycoprotein E2 at the cell membrane, leading to budding and formation of mature virions. In case of infection, new virions attach to target cells and after clathrin-mediated endocytosis their membrane fuses with the host endosomal membrane. This leads to the release of the nucleocapsid into the cytoplasm, followed by an uncoating event necessary for the genomic RNA to become accessible. The uncoating might be triggered by the interaction of capsid proteins with ribosomes. Binding of ribosomes would release the genomic RNA since the same region is genomic RNA-binding and ribosome-binding. Specifically inhibits interleukin-1 receptor-associated kinase 1/IRAK1-dependent signaling during viral entry, representing a means by which the alphaviruses may evade innate immune detection and activation prior to viral gene expression. Inhibits host transcription. Forms a tetrameric complex with XPO1/CRM1 and the nuclear import receptor importin. This complex blocks the central channel of host nuclear pores thereby inhibiting the receptor-mediated nuclear transport and thus the host mRNA and rRNA transcription. The inhibition of transcription is linked to a cytopathic effect on the host cell. In terms of biological role, provides the signal sequence for the translocation of the precursor of protein E3/E2 to the host endoplasmic reticulum. Furin-cleaved E3 remains associated with spike glycoprotein E1 and mediates pH protection of the latter during the transport via the secretory pathway. After virion release from the host cell, the assembly protein E3 is gradually released in the extracellular space. Its function is as follows. Plays a role in viral attachment to target host cell, by binding to the cell receptor LDLRAD3. Synthesized as a p62 precursor which is processed by furin at the cell membrane just before virion budding, giving rise to E2-E1 heterodimer. The p62-E1 heterodimer is stable, whereas E2-E1 is unstable and dissociate at low pH. p62 is processed at the last step, presumably to avoid E1 fusion activation before its final export to cell surface. E2 C-terminus contains a transitory transmembrane that would be disrupted by palmitoylation, resulting in reorientation of the C-terminal tail from lumenal to cytoplasmic side. This step is critical since E2 C-terminus is involved in budding by interacting with capsid proteins. This release of E2 C-terminus in cytoplasm occurs lately in protein export, and precludes premature assembly of particles at the endoplasmic reticulum membrane. Functionally, acts as a viroporin that participates in virus glycoprotein processing and transport to the plasma membrane, cell permeabilization and budding of viral particles. Disrupts the calcium homeostasis of the cell, probably at the endoplasmic reticulum level. This leads to cytoplasmic calcium elevation. Because of its lipophilic properties, the 6K protein is postulated to influence the selection of lipids that interact with the transmembrane domains of the glycoproteins, which, in turn, affects the deformability of the bilayer required for the extreme curvature that occurs as budding proceeds. Present in low amount in virions, about 3% compared to viral glycoproteins. Class II viral fusion protein. Fusion activity is inactive as long as E1 is bound to E2 in mature virion. After virus attachment to cell receptor LDLRAD3 and endocytosis, acidification of the endosome induce dissociation of E1/E2 heterodimer and concomitant trimerization of the E1 subunits. This E1 trimer is fusion active, and promotes release of viral nucleocapsid in cytoplasm after endosome and viral membrane fusion. Efficient fusion requires the presence of cholesterol and sphingolipid in the target membrane. In Venezuelan equine encephalitis virus (strain P676) (VEEV), this protein is Structural polyprotein.